Consider the following 693-residue polypeptide: Alpha-glucosidase (693 aa).

Residues Asp320 and Glu323 contribute to the active site. The active-site Proton donor is Asp416.

The protein belongs to the glycosyl hydrolase 31 family.

Its subcellular location is the cytoplasm. It catalyses the reaction Hydrolysis of terminal, non-reducing (1-&gt;4)-linked alpha-D-glucose residues with release of alpha-D-glucose.. Major soluble alpha-glucosidase. The sequence is that of Alpha-glucosidase (malA) from Saccharolobus solfataricus (strain ATCC 35092 / DSM 1617 / JCM 11322 / P2) (Sulfolobus solfataricus).